The chain runs to 179 residues: Large ribosomal subunit protein uL5 (179 aa).

The protein belongs to the universal ribosomal protein uL5 family. Part of the 50S ribosomal subunit; part of the 5S rRNA/L5/L18/L25 subcomplex. Contacts the 5S rRNA and the P site tRNA. Forms a bridge to the 30S subunit in the 70S ribosome.

Functionally, this is one of the proteins that bind and probably mediate the attachment of the 5S RNA into the large ribosomal subunit, where it forms part of the central protuberance. In the 70S ribosome it contacts protein S13 of the 30S subunit (bridge B1b), connecting the 2 subunits; this bridge is implicated in subunit movement. Contacts the P site tRNA; the 5S rRNA and some of its associated proteins might help stabilize positioning of ribosome-bound tRNAs. The chain is Large ribosomal subunit protein uL5 from Prochlorococcus marinus (strain MIT 9215).